A 728-amino-acid polypeptide reads, in one-letter code: Putative ankyrin repeat protein L271 (728 aa).

ANK repeat units lie at residues 142 to 171 and 173 to 198; these read SDVN…NIKT and IYSA…DIIL. Positions 244–267 are enriched in low complexity; that stretch reads STKSTKSSGSPKSIKPKKSNQNNN. The interval 244 to 271 is disordered; sequence STKSTKSSGSPKSIKPKKSNQNNNAKIN. Residues 292–338 adopt a coiled-coil conformation; that stretch reads TVDKMSSAKEQALNVYKEIENMENFILNKINITKKKALDKIKEIENI. 8 ANK repeats span residues 358-383, 384-414, 477-510, 514-543, 547-576, 594-626, 630-659, and 663-696; these read TNTD…RQGY, DINK…NYEQ, DDLS…NINS, IGRS…DYSF, NGDT…DTKT, DIKT…NVSS, TKKT…NINS, and LGKT…KILI.

The sequence is that of Putative ankyrin repeat protein L271 from Acanthamoeba polyphaga (Amoeba).